Here is a 404-residue protein sequence, read N- to C-terminus: Probable tRNA sulfurtransferase (404 aa).

Residues 60 to 165 (QPIVEALKLV…DEAAYISYEE (106 aa)) form the THUMP domain. Residues 183–184 (ML), 208–209 (HF), arginine 265, glycine 287, and glutamine 296 contribute to the ATP site.

This sequence belongs to the ThiI family.

The protein resides in the cytoplasm. The catalysed reaction is [ThiI sulfur-carrier protein]-S-sulfanyl-L-cysteine + a uridine in tRNA + 2 reduced [2Fe-2S]-[ferredoxin] + ATP + H(+) = [ThiI sulfur-carrier protein]-L-cysteine + a 4-thiouridine in tRNA + 2 oxidized [2Fe-2S]-[ferredoxin] + AMP + diphosphate. It catalyses the reaction [ThiS sulfur-carrier protein]-C-terminal Gly-Gly-AMP + S-sulfanyl-L-cysteinyl-[cysteine desulfurase] + AH2 = [ThiS sulfur-carrier protein]-C-terminal-Gly-aminoethanethioate + L-cysteinyl-[cysteine desulfurase] + A + AMP + 2 H(+). It participates in cofactor biosynthesis; thiamine diphosphate biosynthesis. Its function is as follows. Catalyzes the ATP-dependent transfer of a sulfur to tRNA to produce 4-thiouridine in position 8 of tRNAs, which functions as a near-UV photosensor. Also catalyzes the transfer of sulfur to the sulfur carrier protein ThiS, forming ThiS-thiocarboxylate. This is a step in the synthesis of thiazole, in the thiamine biosynthesis pathway. The sulfur is donated as persulfide by IscS. The protein is Probable tRNA sulfurtransferase of Streptococcus pyogenes serotype M1.